Here is a 197-residue protein sequence, read N- to C-terminus: Thymidylate kinase (197 aa).

7-14 (GIDGCGKS) contacts ATP.

It belongs to the thymidylate kinase family.

The catalysed reaction is dTMP + ATP = dTDP + ADP. In terms of biological role, phosphorylation of dTMP to form dTDP in both de novo and salvage pathways of dTTP synthesis. This Fervidobacterium nodosum (strain ATCC 35602 / DSM 5306 / Rt17-B1) protein is Thymidylate kinase.